The chain runs to 156 residues: Oleosin Zm-I (156 aa).

The interval 1-30 (MADHHRGATGGGGGYGDLQRGGGMHGEAQQ) is disordered. The residue at position 2 (Ala2) is an N-acetylalanine. The polar stretch occupies residues 2–42 (ADHHRGATGGGGGYGDLQRGGGMHGEAQQQQKQGAMMTALK). Residues 8–25 (ATGGGGGYGDLQRGGGMH) show a composition bias toward gly residues. The segment at 43-114 (AATAATFGGS…AALSVFSWMY (72 aa)) is hydrophobic. The next 2 helical transmembrane spans lie at 51-71 (GSML…LTVA) and 95-115 (GFVT…WMYK).

Belongs to the oleosin family. Post-translationally, the N-terminus is blocked.

Its subcellular location is the lipid droplet. The protein localises to the membrane. May have a structural role to stabilize the lipid body during desiccation of the seed by preventing coalescence of the oil. Probably interacts with both lipid and phospholipid moieties of lipid bodies. May also provide recognition signals for specific lipase anchorage in lipolysis during seedling growth. This Zea mays (Maize) protein is Oleosin Zm-I (OLE16).